The sequence spans 352 residues: N-acetyl-gamma-glutamyl-phosphate reductase (352 aa).

Cys155 is a catalytic residue.

Belongs to the NAGSA dehydrogenase family. Type 1 subfamily.

Its subcellular location is the cytoplasm. It carries out the reaction N-acetyl-L-glutamate 5-semialdehyde + phosphate + NADP(+) = N-acetyl-L-glutamyl 5-phosphate + NADPH + H(+). The protein operates within amino-acid biosynthesis; L-arginine biosynthesis; N(2)-acetyl-L-ornithine from L-glutamate: step 3/4. Its function is as follows. Catalyzes the NADPH-dependent reduction of N-acetyl-5-glutamyl phosphate to yield N-acetyl-L-glutamate 5-semialdehyde. In Picosynechococcus sp. (strain ATCC 27264 / PCC 7002 / PR-6) (Agmenellum quadruplicatum), this protein is N-acetyl-gamma-glutamyl-phosphate reductase.